A 191-amino-acid chain; its full sequence is GDP-mannose pyrophosphatase (191 aa).

Residues tyrosine 17, 38 to 40 (KRE), arginine 67, and 85 to 87 (AGL) each bind GDP-alpha-D-mannose. One can recognise a Nudix hydrolase domain in the interval 43–180 (DRGNGATILL…EIRDGKTVLL (138 aa)). Alanine 85, glutamate 100, and glutamate 104 together coordinate Mg(2+). The short motif at 86-106 (GLLDNDEPEVCIRKEAIEETG) is the Nudix box element. GDP-alpha-D-mannose-binding positions include glutamate 104, glutamate 127, 150–151 (DE), and lysine 176. Glutamate 151 serves as a coordination point for Mg(2+).

The protein belongs to the Nudix hydrolase family. NudK subfamily. As to quaternary structure, homodimer. Requires Mg(2+) as cofactor.

It catalyses the reaction GDP-alpha-D-mannose + H2O = alpha-D-mannose 1-phosphate + GMP + 2 H(+). Its function is as follows. Nucleoside diphosphate sugar hydrolase that hydrolyzes GDP-mannose as its preferred substrate, yielding GMP and mannose-1-phosphate. This chain is GDP-mannose pyrophosphatase (nudK), found in Shigella dysenteriae serotype 1 (strain Sd197).